We begin with the raw amino-acid sequence, 176 residues long: Inorganic pyrophosphatase (176 aa).

Substrate contacts are provided by Lys30, Arg44, and Tyr56. The Mg(2+) site is built by Asp66, Asp71, and Asp103. Tyr142 is a binding site for substrate.

It belongs to the PPase family. As to quaternary structure, homohexamer. It depends on Mg(2+) as a cofactor.

The protein localises to the cytoplasm. It catalyses the reaction diphosphate + H2O = 2 phosphate + H(+). Catalyzes the hydrolysis of inorganic pyrophosphate (PPi) forming two phosphate ions. The polypeptide is Inorganic pyrophosphatase (Aeropyrum pernix (strain ATCC 700893 / DSM 11879 / JCM 9820 / NBRC 100138 / K1)).